An 83-amino-acid polypeptide reads, in one-letter code: Small ribosomal subunit protein bS16 (83 aa).

This sequence belongs to the bacterial ribosomal protein bS16 family.

This Finegoldia magna (strain ATCC 29328 / DSM 20472 / WAL 2508) (Peptostreptococcus magnus) protein is Small ribosomal subunit protein bS16.